A 121-amino-acid polypeptide reads, in one-letter code: Glycine cleavage system H protein (121 aa).

The Lipoyl-binding domain occupies 16–98; that stretch reads VATIGITAHA…EAGGWFAKVR (83 aa). N6-lipoyllysine is present on Lys-57.

Belongs to the GcvH family. As to quaternary structure, the glycine cleavage system is composed of four proteins: P, T, L and H. The cofactor is (R)-lipoate.

Functionally, the glycine cleavage system catalyzes the degradation of glycine. The H protein shuttles the methylamine group of glycine from the P protein to the T protein. The sequence is that of Glycine cleavage system H protein from Phenylobacterium zucineum (strain HLK1).